The sequence spans 340 residues: Anthranilate phosphoribosyltransferase (340 aa).

5-phospho-alpha-D-ribose 1-diphosphate contacts are provided by residues Gly82, 85-86 (GD), Thr90, 92-95 (NIST), 110-118 (KHGSRSVSS), and Ser122. Position 82 (Gly82) interacts with anthranilate. Ser94 provides a ligand contact to Mg(2+). Arg168 lines the anthranilate pocket. 2 residues coordinate Mg(2+): Asp227 and Glu228.

It belongs to the anthranilate phosphoribosyltransferase family. In terms of assembly, homodimer. The cofactor is Mg(2+).

The enzyme catalyses N-(5-phospho-beta-D-ribosyl)anthranilate + diphosphate = 5-phospho-alpha-D-ribose 1-diphosphate + anthranilate. Its pathway is amino-acid biosynthesis; L-tryptophan biosynthesis; L-tryptophan from chorismate: step 2/5. Catalyzes the transfer of the phosphoribosyl group of 5-phosphorylribose-1-pyrophosphate (PRPP) to anthranilate to yield N-(5'-phosphoribosyl)-anthranilate (PRA). The chain is Anthranilate phosphoribosyltransferase from Hydrogenovibrio crunogenus (strain DSM 25203 / XCL-2) (Thiomicrospira crunogena).